Here is a 358-residue protein sequence, read N- to C-terminus: ATPase ASNA1 homolog (358 aa).

35–42 contributes to the ATP binding site; that stretch reads KGGVGKTT. Asp64 is a catalytic residue. Glu235 and Asn262 together coordinate ATP.

It belongs to the arsA ATPase family. As to quaternary structure, homodimer.

It is found in the cytoplasm. Its subcellular location is the endoplasmic reticulum. Functionally, ATPase required for the post-translational delivery of tail-anchored (TA) proteins to the endoplasmic reticulum. Recognizes and selectively binds the transmembrane domain of TA proteins in the cytosol. This complex then targets to the endoplasmic reticulum by membrane-bound receptors, where the tail-anchored protein is released for insertion. This process is regulated by ATP binding and hydrolysis. ATP binding drives the homodimer towards the closed dimer state, facilitating recognition of newly synthesized TA membrane proteins. ATP hydrolysis is required for insertion. Subsequently, the homodimer reverts towards the open dimer state, lowering its affinity for the membrane-bound receptor, and returning it to the cytosol to initiate a new round of targeting. The protein is ATPase ASNA1 homolog of Babesia bovis.